A 223-amino-acid chain; its full sequence is UPF0758 protein FMG_0357 (223 aa).

The region spanning 101–223 (SLNDPDSVAE…SLSMRKGMYF (123 aa)) is the MPN domain. 3 residues coordinate Zn(2+): H172, H174, and D185. A JAMM motif motif is present at residues 172–185 (HNHPSGSLIPSNAD).

Belongs to the UPF0758 family.

In Finegoldia magna (strain ATCC 29328 / DSM 20472 / WAL 2508) (Peptostreptococcus magnus), this protein is UPF0758 protein FMG_0357.